The primary structure comprises 174 residues: Pectinesterase inhibitor 12 (174 aa).

The N-terminal stretch at 1-20 (MKFLVSLVIFSLFLNGFATA) is a signal peptide. Cystine bridges form between Cys-28-Cys-43 and Cys-100-Cys-140. Asn-129 carries N-linked (GlcNAc...) asparagine glycosylation.

This sequence belongs to the PMEI family.

The protein resides in the secreted. It is found in the extracellular space. It localises to the apoplast. Its function is as follows. Pectin methylesterase (PME) inhibitor involved in the maintenance of cell wall integrity in response to necrotrophic pathogens. Modulates PME activity and pectin methylesterification during infection by Botrytis cinerea and contributes to resistance against the pathogen. The chain is Pectinesterase inhibitor 12 from Arabidopsis thaliana (Mouse-ear cress).